A 945-amino-acid polypeptide reads, in one-letter code: Xylanolytic transcriptional activator xlnR (945 aa).

The segment covering M1–T23 has biased composition (low complexity). Disordered stretches follow at residues M1–L33 and D52–R93. Residues P63–S72 show a composition bias toward polar residues. Residues H73–K84 show a composition bias toward basic and acidic residues. A DNA-binding region (zn(2)-C6 fungal-type) is located at residues C125 to C151. Disordered stretches follow at residues A172–D210 and P559–T601. The span at T176–A188 shows a compositional bias: polar residues. Basic and acidic residues predominate over residues A565–H581.

Belongs to the xlnR/xlr1 family.

The protein localises to the nucleus. In terms of biological role, transcriptional activator of the xylanolytic system. Involved in the regulation of extracellular cellulolytic and xylanolytic genes and in the regulation of the intracellular activities of D-xylose catabolic genes in the pentose catabolic pathway (PCP) in response to the presence of D-xylose. Binds to the DNA sequence 5'-GGCTAAA-3'. This is Xylanolytic transcriptional activator xlnR (xlnR) from Aspergillus niger (strain ATCC MYA-4892 / CBS 513.88 / FGSC A1513).